A 423-amino-acid polypeptide reads, in one-letter code: Subtilisin-like protease 2 (423 aa).

A signal peptide spans Met-1 to Gly-17. The propeptide occupies Glu-18–Ala-123. An Inhibitor I9 domain is found at Gln-37–Ala-123. Positions Arg-132–Lys-423 constitute a Peptidase S8 domain. Active-site charge relay system residues include Asp-170 and His-202. Asn-249, Asn-262, and Asn-349 each carry an N-linked (GlcNAc...) asparagine glycan. Residue Ser-358 is the Charge relay system of the active site. An N-linked (GlcNAc...) asparagine glycan is attached at Asn-389.

The protein belongs to the peptidase S8 family.

The protein resides in the secreted. In terms of biological role, secreted subtilisin-like serine protease with keratinolytic activity that contributes to pathogenicity. This chain is Subtilisin-like protease 2 (SUB2), found in Arthroderma otae (strain ATCC MYA-4605 / CBS 113480) (Microsporum canis).